The sequence spans 463 residues: Hexokinase-7 (463 aa).

The Hexokinase domain maps to 7 to 456; that stretch reads AAAEQVVAAL…SGLGAALIAA (450 aa). A hexokinase small subdomain region spans residues 62–199; that stretch reads NGTEEGLFYA…GLDMRVSALI (138 aa). Gly-76, Thr-77, and Asn-78 together coordinate ADP. Positions 165, 166, 200, and 201 each coordinate D-glucose. The tract at residues 200–445 is hexokinase large subdomain; sequence NDTVGTLAAG…KSVAVKLAND (246 aa). Thr-224 contributes to the ADP binding site. Residues Asn-227, Glu-255, and Glu-286 each contribute to the D-glucose site. Residue Gly-410 coordinates ADP.

The protein belongs to the hexokinase family. As to expression, expressed in roots, leaves, flowers, immature seeds and seed coat.

The protein resides in the cytoplasm. The catalysed reaction is a D-hexose + ATP = a D-hexose 6-phosphate + ADP + H(+). The enzyme catalyses D-fructose + ATP = D-fructose 6-phosphate + ADP + H(+). It catalyses the reaction D-glucose + ATP = D-glucose 6-phosphate + ADP + H(+). It participates in carbohydrate metabolism; hexose metabolism. The protein operates within carbohydrate degradation; glycolysis; D-glyceraldehyde 3-phosphate and glycerone phosphate from D-glucose: step 1/4. Fructose and glucose phosphorylating enzyme. Functions in sugar signaling via a glycolysis-dependent manner under aerobic conditions, but its signaling role is suppressed when oxygen is deficient. This is Hexokinase-7 (HXK7) from Oryza sativa subsp. japonica (Rice).